The chain runs to 76 residues: Exodeoxyribonuclease 7 small subunit (76 aa).

Belongs to the XseB family. As to quaternary structure, heterooligomer composed of large and small subunits.

The protein resides in the cytoplasm. The catalysed reaction is Exonucleolytic cleavage in either 5'- to 3'- or 3'- to 5'-direction to yield nucleoside 5'-phosphates.. Bidirectionally degrades single-stranded DNA into large acid-insoluble oligonucleotides, which are then degraded further into small acid-soluble oligonucleotides. This Methylococcus capsulatus (strain ATCC 33009 / NCIMB 11132 / Bath) protein is Exodeoxyribonuclease 7 small subunit.